We begin with the raw amino-acid sequence, 282 residues long: Pantothenate synthetase (282 aa).

31-38 (MGYLHEGH) serves as a coordination point for ATP. His-38 acts as the Proton donor in catalysis. Gln-62 provides a ligand contact to (R)-pantoate. Beta-alanine is bound at residue Gln-62. Residue 148-151 (GEKD) coordinates ATP. Residue Gln-154 coordinates (R)-pantoate. ATP is bound by residues Val-177 and 185 to 188 (YSSR).

This sequence belongs to the pantothenate synthetase family. As to quaternary structure, homodimer.

It localises to the cytoplasm. The enzyme catalyses (R)-pantoate + beta-alanine + ATP = (R)-pantothenate + AMP + diphosphate + H(+). Its pathway is cofactor biosynthesis; (R)-pantothenate biosynthesis; (R)-pantothenate from (R)-pantoate and beta-alanine: step 1/1. Its function is as follows. Catalyzes the condensation of pantoate with beta-alanine in an ATP-dependent reaction via a pantoyl-adenylate intermediate. This Aquifex aeolicus (strain VF5) protein is Pantothenate synthetase.